A 233-amino-acid polypeptide reads, in one-letter code: Large ribosomal subunit protein uL1 (233 aa).

This sequence belongs to the universal ribosomal protein uL1 family. In terms of assembly, part of the 50S ribosomal subunit.

Its function is as follows. Binds directly to 23S rRNA. The L1 stalk is quite mobile in the ribosome, and is involved in E site tRNA release. Protein L1 is also a translational repressor protein, it controls the translation of the L11 operon by binding to its mRNA. This chain is Large ribosomal subunit protein uL1, found in Shewanella oneidensis (strain ATCC 700550 / JCM 31522 / CIP 106686 / LMG 19005 / NCIMB 14063 / MR-1).